We begin with the raw amino-acid sequence, 86 residues long: Putative pro-MCH-like protein 2 (86 aa).

The NGE-like stretch occupies residues 31-49 (GSVAFPAENGVQDTESTLE). Residues 40-60 (GVQDTESTLEKRETGDEENSA) form a disordered region. The interval 52-64 (ETGDEENSAKFPI) is NEI-like. A melanin-concentrating hormone-like region spans residues 68 to 86 (DFDTLRCMLGRVYQRCWQV).

The protein belongs to the melanin-concentrating hormone family. As to expression, expressed in testis but not in brain.

This is Putative pro-MCH-like protein 2 (PMCHL2) from Homo sapiens (Human).